A 483-amino-acid chain; its full sequence is MTIFEKSVTGRTGYTLPEEKKDEIRPSDYIPEHLLRKELPGLPECSEIDVVRHYTELTRKNYSVDNGFYPLGSCTMKYNPKLNEKIAALEGFSLLHPYEPIEKVQGALEVMYRLQTLLSEITGMDAFTLQPAAGAHGELTGMLIVKKYFEVKGENQRTKVIVPDSAHGTNPASASMAGFQVVEIKSNDNGIIDLDNLEAALDESVAAIMLTNPNTLGLFEKDIIKIAEMAHKNGTLLYYDGANLNAIMGKVRPGDMGFDIVHLNLHKTFSTPHGMGGPGSGPVGVKGHLKEFLPIPVVDLTDEGYILKTDLSHSIGRIRSFYGNFGVVVKALAYILMLGKDGLTYASEIAVLNANYLRTRLSELIPTAYPGLCKHEFVLDGTKLVKEYGIKTLDLAKRMLDYGVHPPTIYFPLIVHEALMIEPTETENKDNLDHFVEVVKKILEEAKKDPEFVKNAPYNTPIKRLDEVTASRKPKVRWIPKEQ.

K267 is subject to N6-(pyridoxal phosphate)lysine.

The protein belongs to the GcvP family. C-terminal subunit subfamily. The glycine cleavage system is composed of four proteins: P, T, L and H. In this organism, the P 'protein' is a heterodimer of two subunits. Pyridoxal 5'-phosphate serves as cofactor.

The enzyme catalyses N(6)-[(R)-lipoyl]-L-lysyl-[glycine-cleavage complex H protein] + glycine + H(+) = N(6)-[(R)-S(8)-aminomethyldihydrolipoyl]-L-lysyl-[glycine-cleavage complex H protein] + CO2. In terms of biological role, the glycine cleavage system catalyzes the degradation of glycine. The P protein binds the alpha-amino group of glycine through its pyridoxal phosphate cofactor; CO(2) is released and the remaining methylamine moiety is then transferred to the lipoamide cofactor of the H protein. This chain is Probable glycine dehydrogenase (decarboxylating) subunit 2, found in Kosmotoga olearia (strain ATCC BAA-1733 / DSM 21960 / TBF 19.5.1).